We begin with the raw amino-acid sequence, 178 residues long: ATP-dependent protease subunit HslV (178 aa).

The active site involves Thr8. Na(+)-binding residues include Gly163, Cys166, and Thr169.

Belongs to the peptidase T1B family. HslV subfamily. In terms of assembly, a double ring-shaped homohexamer of HslV is capped on each side by a ring-shaped HslU homohexamer. The assembly of the HslU/HslV complex is dependent on binding of ATP.

The protein resides in the cytoplasm. The catalysed reaction is ATP-dependent cleavage of peptide bonds with broad specificity.. With respect to regulation, allosterically activated by HslU binding. In terms of biological role, protease subunit of a proteasome-like degradation complex believed to be a general protein degrading machinery. The chain is ATP-dependent protease subunit HslV from Treponema denticola (strain ATCC 35405 / DSM 14222 / CIP 103919 / JCM 8153 / KCTC 15104).